The following is a 345-amino-acid chain: Biotin synthase (345 aa).

The Radical SAM core domain maps to 49–276 (NQVQMSTLLS…ASFVRLSAGR (228 aa)). Cys-64, Cys-68, and Cys-71 together coordinate [4Fe-4S] cluster. Residues Cys-108, Cys-139, Cys-199, and Arg-271 each contribute to the [2Fe-2S] cluster site.

Belongs to the radical SAM superfamily. Biotin synthase family. As to quaternary structure, homodimer. [4Fe-4S] cluster is required as a cofactor. [2Fe-2S] cluster serves as cofactor.

It carries out the reaction (4R,5S)-dethiobiotin + (sulfur carrier)-SH + 2 reduced [2Fe-2S]-[ferredoxin] + 2 S-adenosyl-L-methionine = (sulfur carrier)-H + biotin + 2 5'-deoxyadenosine + 2 L-methionine + 2 oxidized [2Fe-2S]-[ferredoxin]. Its pathway is cofactor biosynthesis; biotin biosynthesis; biotin from 7,8-diaminononanoate: step 2/2. Its function is as follows. Catalyzes the conversion of dethiobiotin (DTB) to biotin by the insertion of a sulfur atom into dethiobiotin via a radical-based mechanism. This is Biotin synthase from Nitrosococcus oceani (strain ATCC 19707 / BCRC 17464 / JCM 30415 / NCIMB 11848 / C-107).